The sequence spans 144 residues: Large ribosomal subunit protein uL16 (144 aa).

This sequence belongs to the universal ribosomal protein uL16 family. As to quaternary structure, part of the 50S ribosomal subunit.

Functionally, binds 23S rRNA and is also seen to make contacts with the A and possibly P site tRNAs. The polypeptide is Large ribosomal subunit protein uL16 (Thermoanaerobacter sp. (strain X514)).